We begin with the raw amino-acid sequence, 390 residues long: NADH-quinone oxidoreductase subunit D (390 aa).

This sequence belongs to the complex I 49 kDa subunit family. NDH-1 is composed of 14 different subunits. Subunits NuoB, C, D, E, F, and G constitute the peripheral sector of the complex.

It localises to the cell membrane. The catalysed reaction is a quinone + NADH + 5 H(+)(in) = a quinol + NAD(+) + 4 H(+)(out). In terms of biological role, NDH-1 shuttles electrons from NADH, via FMN and iron-sulfur (Fe-S) centers, to quinones in the respiratory chain. The immediate electron acceptor for the enzyme in this species is believed to be ubiquinone. Couples the redox reaction to proton translocation (for every two electrons transferred, four hydrogen ions are translocated across the cytoplasmic membrane), and thus conserves the redox energy in a proton gradient. The chain is NADH-quinone oxidoreductase subunit D from Wolbachia pipientis subsp. Culex pipiens (strain wPip).